We begin with the raw amino-acid sequence, 481 residues long: Cobyric acid synthase (481 aa).

Residues 249–436 (GLHIVCLRLS…LHGMFRDDAF (188 aa)) form the GATase cobBQ-type domain. Cys331 acts as the Nucleophile in catalysis. Residue His428 is part of the active site.

Belongs to the CobB/CobQ family. CobQ subfamily.

It functions in the pathway cofactor biosynthesis; adenosylcobalamin biosynthesis. Its function is as follows. Catalyzes amidations at positions B, D, E, and G on adenosylcobyrinic A,C-diamide. NH(2) groups are provided by glutamine, and one molecule of ATP is hydrogenolyzed for each amidation. This Jannaschia sp. (strain CCS1) protein is Cobyric acid synthase.